We begin with the raw amino-acid sequence, 563 residues long: Arginine--tRNA ligase (563 aa).

The 'HIGH' region signature appears at 121–131 (PNIAKPFSIGH).

This sequence belongs to the class-I aminoacyl-tRNA synthetase family. As to quaternary structure, monomer.

The protein localises to the cytoplasm. The enzyme catalyses tRNA(Arg) + L-arginine + ATP = L-arginyl-tRNA(Arg) + AMP + diphosphate. The sequence is that of Arginine--tRNA ligase from Streptococcus pneumoniae serotype 19F (strain G54).